A 314-amino-acid chain; its full sequence is Porphobilinogen deaminase (314 aa).

At cysteine 249 the chain carries S-(dipyrrolylmethanemethyl)cysteine.

The protein belongs to the HMBS family. In terms of assembly, monomer. Requires dipyrromethane as cofactor.

It catalyses the reaction 4 porphobilinogen + H2O = hydroxymethylbilane + 4 NH4(+). Its pathway is porphyrin-containing compound metabolism; protoporphyrin-IX biosynthesis; coproporphyrinogen-III from 5-aminolevulinate: step 2/4. In terms of biological role, tetrapolymerization of the monopyrrole PBG into the hydroxymethylbilane pre-uroporphyrinogen in several discrete steps. The polypeptide is Porphobilinogen deaminase (Brucella suis biovar 1 (strain 1330)).